A 372-amino-acid chain; its full sequence is Biglycan (372 aa).

An N-terminal signal peptide occupies residues 1 to 19 (MPTMWPLWLLASLLALSQA). Positions 20 to 40 (LPFEQKGFWDFTLDDGLPMLN) are excised as a propeptide. O-linked (Xyl...) (glycosaminoglycan) serine glycosylation is found at Ser-45 and Ser-51. Disulfide bonds link Cys-67–Cys-73 and Cys-71–Cys-80. LRR repeat units follow at residues 86 to 106 (KAVP…NNEI), 107 to 130 (SELR…NNKI), 131 to 154 (SKIH…KNHL), 155 to 175 (VEIP…DNRI), 176 to 199 (RKVP…GNPL), 200 to 224 (ENSG…EAKL), 225 to 245 (TGIP…HNKI), 246 to 269 (QAIE…HNQI), 270 to 293 (RMIE…NNKL), 294 to 316 (SRVP…TNNI), 317 to 346 (TKVG…NNPV), and 347 to 372 (PYWE…NYKK). N-linked (GlcNAc...) asparagine glycosylation is found at Asn-274 and Asn-315. Cys-325 and Cys-358 are joined by a disulfide.

Belongs to the small leucine-rich proteoglycan (SLRP) family. SLRP class I subfamily. In terms of assembly, homodimer. Forms a ternary complex with MFAP2 and ELN. The two attached glycosaminoglycan chains can be either chondroitin sulfate or dermatan sulfate.

It is found in the secreted. Its subcellular location is the extracellular space. The protein localises to the extracellular matrix. May be involved in collagen fiber assembly. The chain is Biglycan (BGN) from Equus caballus (Horse).